The sequence spans 513 residues: ATP synthase subunit alpha (513 aa).

Residue 169-176 participates in ATP binding; it reads GDRQCGKT.

Belongs to the ATPase alpha/beta chains family. As to quaternary structure, F-type ATPases have 2 components, CF(1) - the catalytic core - and CF(0) - the membrane proton channel. CF(1) has five subunits: alpha(3), beta(3), gamma(1), delta(1), epsilon(1). CF(0) has three main subunits: a(1), b(2) and c(9-12). The alpha and beta chains form an alternating ring which encloses part of the gamma chain. CF(1) is attached to CF(0) by a central stalk formed by the gamma and epsilon chains, while a peripheral stalk is formed by the delta and b chains.

The protein localises to the cell inner membrane. The enzyme catalyses ATP + H2O + 4 H(+)(in) = ADP + phosphate + 5 H(+)(out). Its function is as follows. Produces ATP from ADP in the presence of a proton gradient across the membrane. The alpha chain is a regulatory subunit. The protein is ATP synthase subunit alpha of Burkholderia mallei (strain NCTC 10229).